Consider the following 316-residue polypeptide: UDP-N-acetylenolpyruvoylglucosamine reductase (316 aa).

Residues 27–225 (VGGKAERFYR…KTAINALLKK (199 aa)) form the FAD-binding PCMH-type domain. The active site involves Arg-190. The active-site Proton donor is Ser-239. Glu-309 is a catalytic residue.

The protein belongs to the MurB family. It depends on FAD as a cofactor.

The protein resides in the cytoplasm. The enzyme catalyses UDP-N-acetyl-alpha-D-muramate + NADP(+) = UDP-N-acetyl-3-O-(1-carboxyvinyl)-alpha-D-glucosamine + NADPH + H(+). It functions in the pathway cell wall biogenesis; peptidoglycan biosynthesis. Its function is as follows. Cell wall formation. This is UDP-N-acetylenolpyruvoylglucosamine reductase from Coxiella burnetii (strain RSA 331 / Henzerling II).